The following is a 429-amino-acid chain: Tryptophan synthase beta chain 2 (429 aa).

Lysine 111 carries the post-translational modification N6-(pyridoxal phosphate)lysine.

Belongs to the TrpB family. Tetramer of two alpha and two beta chains. The cofactor is pyridoxal 5'-phosphate.

The catalysed reaction is (1S,2R)-1-C-(indol-3-yl)glycerol 3-phosphate + L-serine = D-glyceraldehyde 3-phosphate + L-tryptophan + H2O. It functions in the pathway amino-acid biosynthesis; L-tryptophan biosynthesis; L-tryptophan from chorismate: step 5/5. Its function is as follows. The beta subunit is responsible for the synthesis of L-tryptophan from indole and L-serine. The sequence is that of Tryptophan synthase beta chain 2 (trpB2) from Saccharolobus solfataricus (strain ATCC 35092 / DSM 1617 / JCM 11322 / P2) (Sulfolobus solfataricus).